The chain runs to 282 residues: U1 small nuclear ribonucleoprotein A (282 aa).

RRM domains follow at residues 10 to 89 (NTIY…YSKT) and 208 to 282 (HILF…FAKK).

The protein belongs to the RRM U1 A/B'' family. In terms of assembly, U1 snRNP is composed of the 7 core Sm proteins snrpb, snrpd1, snrpd2, snrpd3, snrpe, snrpf and snrpg that assemble in a heptameric protein ring on the Sm site of the small nuclear RNA to form the core snRNP, and at least three U1 snRNP-specific proteins snrnp70/U1-70K, snrpa/U1-A and snrpc/U1-C.

It is found in the nucleus. Functionally, component of the spliceosomal U1 snRNP, which is essential for recognition of the pre-mRNA 5' splice-site and the subsequent assembly of the spliceosome. U1 snRNP is the first snRNP to interact with pre-mRNA. This interaction is required for the subsequent binding of U2 snRNP and the U4/U6/U5 tri-snRNP. Snrpa binds stem loop II of U1 snRNA. The chain is U1 small nuclear ribonucleoprotein A (snrpa) from Xenopus laevis (African clawed frog).